The following is a 403-amino-acid chain: S-adenosylmethionine synthase (403 aa).

Position 16 (His-16) interacts with ATP. Asp-18 provides a ligand contact to Mg(2+). Residue Glu-44 participates in K(+) binding. The L-methionine site is built by Glu-57 and Gln-100. The segment at Gln-100–Arg-110 is flexible loop. Residues Asp-165 to Lys-167, Asp-242, Arg-248 to Lys-249, Ala-265, and Lys-269 contribute to the ATP site. Residue Asp-242 participates in L-methionine binding. Lys-273 provides a ligand contact to L-methionine.

It belongs to the AdoMet synthase family. Homotetramer; dimer of dimers. Requires Mg(2+) as cofactor. K(+) is required as a cofactor.

The protein localises to the cytoplasm. It carries out the reaction L-methionine + ATP + H2O = S-adenosyl-L-methionine + phosphate + diphosphate. It participates in amino-acid biosynthesis; S-adenosyl-L-methionine biosynthesis; S-adenosyl-L-methionine from L-methionine: step 1/1. Its function is as follows. Catalyzes the formation of S-adenosylmethionine (AdoMet) from methionine and ATP. The overall synthetic reaction is composed of two sequential steps, AdoMet formation and the subsequent tripolyphosphate hydrolysis which occurs prior to release of AdoMet from the enzyme. The protein is S-adenosylmethionine synthase of Nitrosococcus oceani (strain ATCC 19707 / BCRC 17464 / JCM 30415 / NCIMB 11848 / C-107).